The sequence spans 707 residues: Toxin RTX-I translocation ATP-binding protein (707 aa).

In terms of domain architecture, Peptidase C39 spans 1–125 (MDFYREEDYG…SLYQGKLILV (125 aa)). The active site involves histidine 83. One can recognise an ABC transmembrane type-1 domain in the interval 154-436 (FIETLIVSIF…LAQLWQDFQQ (283 aa)). Helical transmembrane passes span 158–178 (LIVSIFLQIFALITPLFFQVV), 188–208 (FSTLNVITVALAIVVLFEIVL), 295–315 (LVILGSLPFYMGWSIFISPIL), 387–407 (VVMVITLWLGAHLVISGDLSI), and 410–430 (LIAFNMLSGQVIAPVIRLAQL). The region spanning 468 to 703 (ITFRNIRFRY…PNGLYHYLHQ (236 aa)) is the ABC transporter domain. 502-509 (GRSGSGKS) serves as a coordination point for ATP.

The protein belongs to the ABC transporter superfamily. Protein-1 exporter (TC 3.A.1.109) family. As to quaternary structure, homodimer.

The protein localises to the cell membrane. Its function is as follows. Involved in the transport of the toxin RTX-I as well as that of RTX-II. The sequence is that of Toxin RTX-I translocation ATP-binding protein (apxIB) from Actinobacillus pleuropneumoniae (Haemophilus pleuropneumoniae).